A 569-amino-acid chain; its full sequence is Urease subunit alpha (569 aa).

The region spanning Gly131–Leu569 is the Urease domain. Ni(2+) contacts are provided by His136, His138, and Lys219. N6-carboxylysine is present on Lys219. His221 contributes to the substrate binding site. Ni(2+) contacts are provided by His248 and His274. The active-site Proton donor is His322. A Ni(2+)-binding site is contributed by Asp362.

This sequence belongs to the metallo-dependent hydrolases superfamily. Urease alpha subunit family. Heterotrimer of UreA (gamma), UreB (beta) and UreC (alpha) subunits. Two heterotrimers associate to form the active enzyme. In most bacteria it is thought that three heterotrimers form the active enzyme. The cofactor is Ni cation. Carboxylation allows a single lysine to coordinate two nickel ions.

It is found in the cytoplasm. It catalyses the reaction urea + 2 H2O + H(+) = hydrogencarbonate + 2 NH4(+). It functions in the pathway nitrogen metabolism; urea degradation; CO(2) and NH(3) from urea (urease route): step 1/1. Inhibited by HgCl2 and acetohydroxyamic acid slightly by EDTA, but not by boric acid or L-methionine-DL-sulfoximine. This is Urease subunit alpha from Prochlorococcus marinus subsp. pastoris (strain PCC 9511).